The following is a 521-amino-acid chain: Amidase 1 (521 aa).

Residues Lys-112 and Ser-187 each act as charge relay system in the active site. Substrate-binding positions include Ser-187 and 208 to 211 (IGGS). The Acyl-ester intermediate role is filled by Ser-211.

This sequence belongs to the amidase family.

It catalyses the reaction a monocarboxylic acid amide + H2O = a monocarboxylate + NH4(+). It functions in the pathway xenobiotic degradation. Its function is as follows. Amidase; part of the Fusarium detoxification of benzoxazolinone cluster 1 (FDB1) involved in the degradation of benzoxazolinones produced by the host plant. Maize, wheat, and rye produce the 2 benzoxazinone phytoanticipins 2,4-dihy-droxy-7-methoxy-1,4-benzoxazin-3-one (DIMBOA) and 2,4-dihydroxy-1,4-benzoxazin-3-one (DIBOA) that, due to their inherent instability once released, spontaneously degrade to the more stable corresponding benzoxazolinones, 6-methoxy-2-benzoxazolinone (MBOA) and 2-benzoxazolinone (BOA), respectively. The first step in the detoxification of benzoxazolinones involves the hydrolysis of the cyclic ester bond of benzoxazolinones by the FDB1 cluster gamma-lactamase MBL1 to aminophenols. MBL1 is able to convert BOA into 2-aminophenol (2-AP), as well as MBOA into 5-methoxy-2-aminophenol (2-AMP). The FDB2 cluster N-malonyltransferase FDB2/NAT1 then metabolizes aminophenols via N-malonylation to non-toxic malonamic acids. FDB2/NAT1 converts 2-AP into N-(2-hydroxyphenyl) malonamic acid (HPMA) and 2-AMP into N-(2-hydroxy-4-methoxyphenyl) malonamic acid (HMPMA). The duplicated dienlactone hydrolases DLH1 and DLH2 may provide redundant function for hydrolyzing the lactone moiety in the BOA molecule. The roles of the amidases an other enzymes encoded by the 2 FDB clusters have not been identified so far. In Gibberella moniliformis (strain M3125 / FGSC 7600) (Maize ear and stalk rot fungus), this protein is Amidase 1.